The primary structure comprises 379 residues: MSHSSLHPSIPWPRGHKAKVAAFVLLIVCLAALWKLGEPSDHLLQWLVLHLASLHLRLLFKRVCCLAEELCHIHPRYQGNYSRAVRACLGCPIRYGAVLLLSCYFYVSLPNTVDLPLTWMLAHLGLSEALNILLGLQSLTPAEISTICEQRNFNVAHGLAWSYYIGYLQLILPGLRARIHTYNQLHSNTLQGVGSHRLYILFPLDCGVLDDLSAADPNIRFLHELPRQSADRAGIKGRVYTNSVYELLEKGKPVGTCVLEYATPLQTLFAMSQDGRAGFSQEDRLEQAKLFCRTLEDILADAPESQKNCRLIVYQEPTEESDFSLSQEILKHLRQEEREEVTMGTAGTFVAPGSSTLHQEPELLISGMDQPLPLRTDIF.

The next 3 membrane-spanning stretches (helical) occupy residues 20 to 40, 87 to 107, and 115 to 135; these read VAAF…GEPS, ACLG…YFYV, and LPLT…ILLG. Residues cysteine 88 and cysteine 91 are each lipidated (S-palmitoyl cysteine). Residues 153 to 340 form a cyclic dinucleotide-binding domain (CBD) region; sequence FNVAHGLAWS…KHLRQEEREE (188 aa). The 2',3'-cGAMP site is built by serine 162, tyrosine 167, arginine 238, and threonine 263. Residues serine 162, tyrosine 167, 238-241, and threonine 263 contribute to the 3',3'-c-di-GMP site; that span reads RVYT. 3 residues coordinate 2',3'-cUAMP: tyrosine 167, arginine 238, and threonine 263. Residues 340–379 form a C-terminal tail (CTT) region; the sequence is EVTMGTAGTFVAPGSSTLHQEPELLISGMDQPLPLRTDIF. At serine 355 the chain carries Phosphoserine. Threonine 356 carries the phosphothreonine modification. A pLxIS motif motif is present at residues 363–366; the sequence is LLIS. Position 366 is a phosphoserine; by TBK1 (serine 366).

The protein belongs to the STING family. As to quaternary structure, homodimer; forms a homodimer in absence of cyclic nucleotide (c-di-GMP or cGAMP). Homotetramer; in presence of cyclic nucleotide (c-di-GMP or cGAMP), forms tetramers and higher-order oligomers through side-by-side packing. Interacts (when phosphorylated) with IRF3; following activation and phosphorylation on the pLxIS motif by TBK1, recruits IRF3. Interacts with TBK1; when homodimer, leading to subsequent production of IFN-beta. Interacts (via transmembrane domain) with TMEM203. Phosphorylation by TBK1 leads to activation and production of IFN-beta. Following cyclic nucleotide (c-di-GMP or cGAMP)-binding, activation and translocation from the endoplasmic reticulum, STING1 is phosphorylated by TBK1 at Ser-366 in the pLxIS motif. The phosphorylated pLxIS motif constitutes an IRF3-binding motif, leading to recruitment of the transcription factor IRF3 to induce type-I interferons and other cytokines. In contrast, lacks phosphorylation site at position 358, leading to reduced production of type-I interferons and other cytokines.

Its subcellular location is the endoplasmic reticulum membrane. It is found in the cytoplasm. The protein resides in the perinuclear region. The protein localises to the endoplasmic reticulum-Golgi intermediate compartment membrane. It localises to the golgi apparatus membrane. Its subcellular location is the cytoplasmic vesicle. It is found in the autophagosome membrane. The protein resides in the mitochondrion outer membrane. The protein localises to the cell membrane. It catalyses the reaction H(+)(in) = H(+)(out). Facilitator of innate immune signaling that acts as a sensor of cytosolic DNA from bacteria and viruses and promotes low production of type I interferon (IFN-alpha and IFN-beta). Compared to other mammals, STING1-dependent type I interferon induction is strongly reduced in bats, suggesting that the cGAS-STING pathway promotes a limited inflammatory response. Innate immune response is triggered in response to non-CpG double-stranded DNA from viruses and bacteria delivered to the cytoplasm. Acts by binding cyclic dinucleotides: recognizes and binds cyclic di-GMP (c-di-GMP), a second messenger produced by bacteria, cyclic UMP-AMP (2',3'-cUAMP), and cyclic GMP-AMP (cGAMP), a messenger produced by CGAS in response to DNA virus in the cytosol. Upon binding to c-di-GMP, cUAMP or cGAMP, STING1 oligomerizes, translocates from the endoplasmic reticulum and is phosphorylated by TBK1 on the pLxIS motif, leading to recruitment and subsequent activation of the transcription factor IRF3 to induce expression of type I interferon and exert a potent anti-viral state. In addition to promote the production of type I interferons, plays a direct role in autophagy. Following cGAMP-binding, STING1 buds from the endoplasmic reticulum into COPII vesicles, which then form the endoplasmic reticulum-Golgi intermediate compartment (ERGIC). The ERGIC serves as the membrane source for WIPI2 recruitment and LC3 lipidation, leading to formation of autophagosomes that target cytosolic DNA or DNA viruses for degradation by the lysosome. Promotes autophagy by acting as a proton channel that directs proton efflux from the Golgi to facilitate MAP1LC3B/LC3B lipidation. The autophagy- and interferon-inducing activities can be uncoupled and autophagy induction is independent of TBK1 phosphorylation. The protein is Stimulator of interferon genes protein of Eidolon helvum (Straw-colored fruit bat).